Reading from the N-terminus, the 393-residue chain is Probable xylan O-acetyltransferase 11 (393 aa).

The Cytoplasmic portion of the chain corresponds to 1-9; the sequence is MHQPAIMQR. Residues 10-26 traverse the membrane as a helical; Signal-anchor for type II membrane protein segment; it reads ALAVVALLAAAAAIAAA. Topologically, residues 27 to 393 are lumenal; it reads QGESPELLPF…LFFPARDEAI (367 aa). 4 disulfides stabilise this stretch: cysteine 45–cysteine 96, cysteine 67–cysteine 132, cysteine 76–cysteine 368, and cysteine 283–cysteine 364. Asparagine 102 is a glycosylation site (N-linked (GlcNAc...) asparagine). The GDS motif signature appears at 119–121; the sequence is GDS. The active-site Nucleophile is the serine 121. Asparagine 325 is a glycosylation site (N-linked (GlcNAc...) asparagine). The active-site Proton donor is aspartate 363. A DXXH motif motif is present at residues 363 to 366; it reads DCTH. Histidine 366 serves as the catalytic Proton acceptor.

Belongs to the PC-esterase family. TBL subfamily. As to expression, expressed in roots, leaves and stems.

It localises to the golgi apparatus membrane. Its function is as follows. Probable xylan acetyltransferase required for 2-O- and 3-O-monoacetylation of xylosyl residues in xylan. Possesses extremely low activity in vitro. The sequence is that of Probable xylan O-acetyltransferase 11 from Oryza sativa subsp. japonica (Rice).